A 223-amino-acid chain; its full sequence is Regulator of G-protein signaling 19 (223 aa).

Positions 1–30 (MPTPPEAEKQQTGPEEADQPPSMSSHDAAP) are disordered. The span at 20–29 (PPSMSSHDAA) shows a compositional bias: low complexity. A phosphoserine mark is found at Ser-24 and Ser-103. The 117-residue stretch at 96 to 212 (SFDKLMHSPA…LSSPAYRALL (117 aa)) folds into the RGS domain. The residue at position 157 (Ser-157) is a Phosphoserine; by MAPK1 and MAPK3. Residues 213–223 (LQGASQSSSEA) form an interaction with GIPC region.

As to quaternary structure, interacts with GIPC PDZ domain. Interacts with GNAO1. Post-translationally, fatty acylated. Heavily palmitoylated in the cysteine string motif. Phosphorylated, mainly on serine residues.

It localises to the membrane. Its function is as follows. Inhibits signal transduction by increasing the GTPase activity of G protein alpha subunits thereby driving them into their inactive GDP-bound form. Binds to G-alpha subfamily 1 members, with the order G(i)a3 &gt; G(i)a1 &gt; G(o)a &gt;&gt; G(z)a/G(i)a2. Activity on G(z)-alpha is inhibited by phosphorylation and palmitoylation of the G-protein. This Bos taurus (Bovine) protein is Regulator of G-protein signaling 19 (RGS19).